The chain runs to 182 residues: A-type ATP synthase subunit E (182 aa).

The protein belongs to the V-ATPase E subunit family. Has multiple subunits with at least A(3), B(3), C, D, E, F, H, I and proteolipid K(x).

It is found in the cell membrane. Component of the A-type ATP synthase that produces ATP from ADP in the presence of a proton gradient across the membrane. This Picrophilus torridus (strain ATCC 700027 / DSM 9790 / JCM 10055 / NBRC 100828 / KAW 2/3) protein is A-type ATP synthase subunit E.